The chain runs to 140 residues: Ribosome maturation factor RimP (140 aa).

It belongs to the RimP family.

The protein resides in the cytoplasm. In terms of biological role, required for maturation of 30S ribosomal subunits. This chain is Ribosome maturation factor RimP, found in Campylobacter jejuni subsp. jejuni serotype O:6 (strain 81116 / NCTC 11828).